The sequence spans 324 residues: Zinc transporter ZIP1 (324 aa).

Residues 1-30 (MGPWGEPELLVWRPEAAASEAPVPMGLEVK) lie on the Extracellular side of the membrane. Residues 31 to 51 (LGALVLLLVLTLICSLVPVCV) form a helical membrane-spanning segment. Topologically, residues 52–68 (LRRPGANPEASASRQKA) are cytoplasmic. Residues 69–89 (LSLVSCFAGGVFLATCLLDLL) form a helical membrane-spanning segment. The Extracellular portion of the chain corresponds to 90–104 (PDYLGAIDEALAALH). A helical membrane pass occupies residues 105 to 125 (VTLQFPLQEFILAMGFFLVLV). The Cytoplasmic segment spans residues 126 to 179 (MEQITLAYKEQSGPPPREETRALLGTVNGGPQHWHDGLGVPQAGGASSAPSALR). A helical transmembrane segment spans residues 180 to 200 (ACVLVFSLALHSVFEGLAVGL). Residues 201–206 (QRDQAR) are Extracellular-facing. Residues 207 to 227 (AMELCLALLLHKGILAVSLSL) form a helical membrane-spanning segment. The Cytoplasmic portion of the chain corresponds to 228 to 237 (RLLQSHLRAQ). The helical transmembrane segment at 238-258 (VVAGCGILFSCMTPLGIGLGT) threads the bilayer. At 259-272 (ALAESAGPLHQLAQ) the chain is on the extracellular side. The chain crosses the membrane as a helical span at residues 273 to 293 (SVLEGMAAGTFLYITFLEILP). Over 294–303 (QELATSEQRI) the chain is Cytoplasmic. Residues 304–324 (LKVILLLAGFALLTGLLFIQI) form a helical membrane-spanning segment.

It belongs to the ZIP transporter (TC 2.A.5) family.

The protein resides in the cell membrane. The protein localises to the endoplasmic reticulum membrane. It catalyses the reaction Zn(2+)(in) = Zn(2+)(out). Transporter for the divalent cation Zn(2+). Mediates the influx of Zn(2+) into cells from extracellular space. In Bos taurus (Bovine), this protein is Zinc transporter ZIP1 (SLC39A1).